Reading from the N-terminus, the 423-residue chain is Histidine--tRNA ligase (423 aa).

It belongs to the class-II aminoacyl-tRNA synthetase family. In terms of assembly, homodimer.

The protein resides in the cytoplasm. It catalyses the reaction tRNA(His) + L-histidine + ATP = L-histidyl-tRNA(His) + AMP + diphosphate + H(+). This is Histidine--tRNA ligase from Bacillus cytotoxicus (strain DSM 22905 / CIP 110041 / 391-98 / NVH 391-98).